Consider the following 513-residue polypeptide: uncharacterized protein (513 aa).

2 disordered regions span residues 72-113 and 155-262; these read GVVP…TGQF and IMGG…NPRF. Residues 82-106 show a composition bias toward low complexity; sequence ANRTANPNTNSNPNPNATNAQPNPT. Composition is skewed to polar residues over residues 164–189 and 210–228; these read EANS…QTQG and TPLN…EFQQ. Positions 229–238 are enriched in low complexity; that stretch reads TTSPIFSSSS. Pro residues predominate over residues 239 to 248; the sequence is TPPPPPPRPS. Polar residues predominate over residues 253 to 262; sequence GESQNTNPRF. An RING-type; atypical zinc finger spans residues 396–437; it reads CTICMEMFKINDDVIQLPCKHYFHENCIKPWLRVNGTCAICR. Positions 439–513 are disordered; it reads PVDPNSQQRN…DDFVDEEPLE (75 aa). The span at 442–493 shows a compositional bias: polar residues; sequence PNSQQRNNTSTDSANGHNPSNHANPSTSTTNDQGATLRNESFNAASQSNLSS.

This is an uncharacterized protein from Schizosaccharomyces pombe (strain 972 / ATCC 24843) (Fission yeast).